The primary structure comprises 133 residues: S-adenosylmethionine decarboxylase proenzyme (133 aa).

The Schiff-base intermediate with substrate; via pyruvic acid role is filled by serine 63. The residue at position 63 (serine 63) is a Pyruvic acid (Ser); by autocatalysis. Residue histidine 68 is the Proton acceptor; for processing activity of the active site. Cysteine 83 functions as the Proton donor; for catalytic activity in the catalytic mechanism.

The protein belongs to the prokaryotic AdoMetDC family. Type 1 subfamily. As to quaternary structure, heterotetramer of two alpha and two beta chains arranged as a dimer of alpha/beta heterodimers. Pyruvate is required as a cofactor. Is synthesized initially as an inactive proenzyme. Formation of the active enzyme involves a self-maturation process in which the active site pyruvoyl group is generated from an internal serine residue via an autocatalytic post-translational modification. Two non-identical subunits are generated from the proenzyme in this reaction, and the pyruvate is formed at the N-terminus of the alpha chain, which is derived from the carboxyl end of the proenzyme. The post-translation cleavage follows an unusual pathway, termed non-hydrolytic serinolysis, in which the side chain hydroxyl group of the serine supplies its oxygen atom to form the C-terminus of the beta chain, while the remainder of the serine residue undergoes an oxidative deamination to produce ammonia and the pyruvoyl group blocking the N-terminus of the alpha chain.

The catalysed reaction is S-adenosyl-L-methionine + H(+) = S-adenosyl 3-(methylsulfanyl)propylamine + CO2. It participates in amine and polyamine biosynthesis; S-adenosylmethioninamine biosynthesis; S-adenosylmethioninamine from S-adenosyl-L-methionine: step 1/1. In terms of biological role, catalyzes the decarboxylation of S-adenosylmethionine to S-adenosylmethioninamine (dcAdoMet), the propylamine donor required for the synthesis of the polyamines spermine and spermidine from the diamine putrescine. This Acidithiobacillus ferrooxidans (strain ATCC 23270 / DSM 14882 / CIP 104768 / NCIMB 8455) (Ferrobacillus ferrooxidans (strain ATCC 23270)) protein is S-adenosylmethionine decarboxylase proenzyme.